We begin with the raw amino-acid sequence, 223 residues long: Cytotoxic T-lymphocyte protein 4 (223 aa).

The N-terminal stretch at 1-35 is a signal peptide; the sequence is MACLGLRRYKAQLQLPSRTWPFVALLTLLFIPVFS. Residues 36-145 enclose the Ig-like V-type domain; that stretch reads EAIQVTQPSV…PPPYFVGMGN (110 aa). Residues 36-161 are Extracellular-facing; the sequence is EAIQVTQPSV…IDPEPCPDSD (126 aa). The interval 46-50 is homodimerization; it reads VLASS. Disulfide bonds link Cys58–Cys129 and Cys85–Cys103. Asn108 and Asn113 each carry an N-linked (GlcNAc...) asparagine glycan. The segment at 134–139 is important for interaction with CD80 and CD86; that stretch reads MYPPPY. The N-linked (GlcNAc...) asparagine glycan is linked to Asn145. The interval 150-155 is homodimerization; it reads YVIDPE. Residues 162 to 182 traverse the membrane as a helical segment; that stretch reads FLLWILVAVSLGLFFYSFLVS. Topologically, residues 183–223 are cytoplasmic; the sequence is AVSLSKMLKKRSPLTTGVYVKMPPTEPECEKQFQPYFIPIN. Residue Tyr201 is modified to Phosphotyrosine; by TXK and JAK2.

As to quaternary structure, homodimer; disulfide-linked. Binds to CD80/B7-1 and CD86/B7.2. Interacts with ICOSLG. In terms of processing, N-glycosylation is important for dimerization. Post-translationally, phosphorylation at Tyr-201 prevents binding to the AP-2 adapter complex, blocks endocytosis, and leads to retention of CTLA4 on the cell surface. As to expression, widely expressed with highest levels in lymphoid tissues.

The protein localises to the cell membrane. Functionally, inhibitory receptor acting as a major negative regulator of T-cell responses. The affinity of CTLA4 for its natural B7 family ligands, CD80 and CD86, is considerably stronger than the affinity of their cognate stimulatory coreceptor CD28. This Mus musculus (Mouse) protein is Cytotoxic T-lymphocyte protein 4 (Ctla4).